Here is a 432-residue protein sequence, read N- to C-terminus: ATP-dependent RNA helicase SUB2 (432 aa).

Residues 1–17 (MSAEGQEELLDYSDSEE) are compositionally biased toward acidic residues. Residues 1–35 (MSAEGQEELLDYSDSEEIAVPSNAPEAGADGADKD) form a disordered region. A Q motif motif is present at residues 48–76 (TGFRDFLLKPELLRAIGDCGFEHPSEVQQ). Positions 79-254 (IPQSILGTDV…KKFMQNPLEI (176 aa)) constitute a Helicase ATP-binding domain. 92–99 (AKSGLGKT) serves as a coordination point for ATP. The DEAD box motif lies at 201–204 (DECD). A Helicase C-terminal domain is found at 266 to 427 (GLQQYYLKLD…EFPEEGVDSS (162 aa)).

It belongs to the DEAD box helicase family. DECD subfamily.

The protein localises to the nucleus. The catalysed reaction is ATP + H2O = ADP + phosphate + H(+). Functionally, ATP-binding RNA helicase involved in transcription elongation and required for the export of mRNA out of the nucleus. SUB2 also plays a role in pre-mRNA splicing and spliceosome assembly. May be involved in rDNA and telomeric silencing, and maintenance of genome integrity. The protein is ATP-dependent RNA helicase SUB2 (SUB2) of Meyerozyma guilliermondii (strain ATCC 6260 / CBS 566 / DSM 6381 / JCM 1539 / NBRC 10279 / NRRL Y-324) (Yeast).